Reading from the N-terminus, the 192-residue chain is dTTP/UTP pyrophosphatase (192 aa).

Aspartate 68 functions as the Proton acceptor in the catalytic mechanism.

Belongs to the Maf family. YhdE subfamily. A divalent metal cation serves as cofactor.

Its subcellular location is the cytoplasm. It catalyses the reaction dTTP + H2O = dTMP + diphosphate + H(+). The enzyme catalyses UTP + H2O = UMP + diphosphate + H(+). Nucleoside triphosphate pyrophosphatase that hydrolyzes dTTP and UTP. May have a dual role in cell division arrest and in preventing the incorporation of modified nucleotides into cellular nucleic acids. This Cereibacter sphaeroides (strain ATCC 17023 / DSM 158 / JCM 6121 / CCUG 31486 / LMG 2827 / NBRC 12203 / NCIMB 8253 / ATH 2.4.1.) (Rhodobacter sphaeroides) protein is dTTP/UTP pyrophosphatase.